The sequence spans 124 residues: uncharacterized protein (124 aa).

Residues 13-33 (IIFMALYFVITGIVIRLIGYS) traverse the membrane as a helical segment.

The protein resides in the membrane. This is an uncharacterized protein from Bacillus anthracis.